Here is a 711-residue protein sequence, read N- to C-terminus: Probable cyclic nucleotide-gated ion channel 10 (711 aa).

Residues 1–81 (MAFSHDNRVR…QDSFLQNWNK (81 aa)) are Cytoplasmic-facing. The helical transmembrane segment at 82 to 102 (IFLFACVVALAIDPLFFYIPI) threads the bilayer. Residues 103-116 (VDSARHCLTLDSKL) are Extracellular-facing. A helical membrane pass occupies residues 117-137 (EIAASLLRTLIDAFYIIHIVF). Topologically, residues 138 to 170 (QFRTAYIAPSSRVFGRGELVDDAKAIALKYLSS) are cytoplasmic. A helical transmembrane segment spans residues 171 to 191 (YFIIDLLSILPLPQIVVLAVI). The Extracellular portion of the chain corresponds to 192–204 (PSVNQPVSLLTKD). A helical membrane pass occupies residues 205 to 225 (YLKFSIIAQYVPRILRMYPLY). Topologically, residues 226 to 243 (TEVTRTSGIVTETAWAGA) are cytoplasmic. A helical transmembrane segment spans residues 244-264 (AWNLSLYMLASHVFGALWYLI). The Extracellular portion of the chain corresponds to 265–366 (SVEREDRCWQ…GQNLQTSKFV (102 aa)). A helical transmembrane segment spans residues 367–387 (GEIIFAISICISGLVLFALLI). Over 388–711 (GNMQKYLEST…DFTANHTTDP (324 aa)) the chain is Cytoplasmic. Residues 473–603 (LFEI…TFRF) and E544 contribute to the a nucleoside 3',5'-cyclic phosphate site. The segment at 589–604 (FRRLHSKQLQHTFRFY) is calmodulin-binding. The region spanning 609-638 (RTWSVSFIQAAWRRYCRRKLAKSLRDEEDR) is the IQ domain. The tract at residues 689 to 711 (YTLPLLPQKPTEPDFTANHTTDP) is disordered.

Belongs to the cyclic nucleotide-gated cation channel (TC 1.A.1.5) family. As to quaternary structure, homotetramer or heterotetramer.

The protein resides in the cell membrane. Its function is as follows. Probable cyclic nucleotide-gated ion channel. The protein is Probable cyclic nucleotide-gated ion channel 10 (CNGC10) of Arabidopsis thaliana (Mouse-ear cress).